Reading from the N-terminus, the 301-residue chain is Methionyl-tRNA formyltransferase (301 aa).

Residue 109–112 (SILP) participates in (6S)-5,6,7,8-tetrahydrofolate binding.

Belongs to the Fmt family.

The catalysed reaction is L-methionyl-tRNA(fMet) + (6R)-10-formyltetrahydrofolate = N-formyl-L-methionyl-tRNA(fMet) + (6S)-5,6,7,8-tetrahydrofolate + H(+). In terms of biological role, attaches a formyl group to the free amino group of methionyl-tRNA(fMet). The formyl group appears to play a dual role in the initiator identity of N-formylmethionyl-tRNA by promoting its recognition by IF2 and preventing the misappropriation of this tRNA by the elongation apparatus. In Campylobacter curvus (strain 525.92), this protein is Methionyl-tRNA formyltransferase.